The primary structure comprises 1337 residues: C-Jun-amino-terminal kinase-interacting protein 3 (1337 aa).

The region spanning 12 to 100 (VVVYQDDYCS…LTQYEREKAL (89 aa)) is the RH1 domain. Residues 50 to 80 (EVVKELMPLVVNVLENLDSVLSENQEHEVEL) are kinesin-binding domain (KBD); essential for its function in axon elongation. Positions 58-177 (LVVNVLENLD…HTEMIQTYVE (120 aa)) form a coiled coil. 2 disordered regions span residues 183–211 (KMQQVGGSGQTESSLPGRSRKERPTSLNV) and 245–285 (SSSY…PSAA). A compositionally biased stretch (polar residues) spans 184 to 198 (MQQVGGSGQTESSLP). Residues 210–226 (NVFPLADGMVRAQMGGK) are JNK-binding domain (JBD); essential for its function in axon elongation. Low complexity predominate over residues 261-270 (SSAAATPSTT). Phosphothreonine; by MAPK occurs at positions 266, 276, and 287. Over residues 271-282 (GTKSNTPTSSVP) the composition is skewed to polar residues. A phosphoserine; by ROCK1 mark is found at Ser-315 and Ser-365. Ser-366 is subject to Phosphoserine. Residues 424–459 (LLLENSQLLETKNALNVVKNDLIAKVDQLSGEQEVL) are leucine zipper-like domain (LZ); essential for its function in axon elongation. The stretch at 437-555 (ALNVVKNDLI…LQEAVRWTEM (119 aa)) forms a coiled coil. The segment at 459–515 (LKGELEAAKQAKVKLENRIKELEEELKRVKSEAVTARREPREEVEDVSSYLCTELDK) is interaction with NTRK2. The 75-residue stretch at 521 to 595 (RRRFTRVEMA…SPPPAKRSYP (75 aa)) folds into the RH2 domain. The residue at position 603 (Ser-603) is a Phosphoserine. The segment at 633–655 (DDCTSSARREQKREQYRQVREHV) is disordered. The span at 639–655 (ARREQKREQYRQVREHV) shows a compositional bias: basic and acidic residues. The residue at position 677 (Ser-677) is a Phosphoserine. 2 disordered regions span residues 719–772 (WKPH…ATSS) and 859–966 (PRSN…TTTS). Positions 739–765 (LTCDREGEGEPKSTHPSPEKKKAKETP) are enriched in basic and acidic residues. Polar residues-rich tracts occupy residues 879 to 892 (VATTANGKVNPSQS) and 941 to 952 (ENGSESNGTIVQ).

This sequence belongs to the JIP scaffold family. Forms homo- or heterooligomeric complexes. The central region of MAPK8IP3 interacts with the C-terminal of MAPK8IP2 but not MAPK8IP1. Binds specific components of the JNK signaling pathway namely MAPK8/JNK1, MAPK9/JNK2 and MAPK10/JNK3 to the N-terminal region, MAP2K4/MKK4 and MAP2K7/MKK7 to the central region and MAP3K11 to the C-terminal region. Binds the TPR motif-containing C-terminal of kinesin light chain, KLC1. Pre-assembled MAPK8IP1 scaffolding complexes are then transported as a cargo of kinesin, to the required subcellular location. Interacts with ROCK1 and this interaction is enhanced by ultraviolet-B (UVB) radiation. Interacts with SH3RF2. Interacts with NTRK2/TRKB and NTRK3/TRKC. Post-translationally, phosphorylation by ROCK1 is crucial for the recruitment of JNK. As to expression, highly expressed throughout many regions of the brain and at lower levels in the heart, liver, lung, testes and kidney. All isoforms have been identified in the brain, isoform 1a is also expressed in the spleen and lung.

It localises to the cytoplasm. The protein localises to the golgi apparatus. The protein resides in the cytoplasmic vesicle. Its subcellular location is the cell projection. It is found in the growth cone. It localises to the axon. The protein localises to the dendrite. The protein resides in the perinuclear region. In terms of biological role, the JNK-interacting protein (JIP) group of scaffold proteins selectively mediates JNK signaling by aggregating specific components of the MAPK cascade to form a functional JNK signaling module. May function as a regulator of vesicle transport, through interactions with the JNK-signaling components and motor proteins. Promotes neuronal axon elongation in a kinesin- and JNK-dependent manner. Activates cofilin at axon tips via local activation of JNK, thereby regulating filopodial dynamics and enhancing axon elongation. Its binding to kinesin heavy chains (KHC), promotes kinesin-1 motility along microtubules and is essential for axon elongation and regeneration. Regulates cortical neuronal migration by mediating NTRK2/TRKB anterograde axonal transport during brain development. Acts as an adapter that bridges the interaction between NTRK2/TRKB and KLC1 and drives NTRK2/TRKB axonal but not dendritic anterograde transport, which is essential for subsequent BDNF-triggered signaling and filopodia formation. In Mus musculus (Mouse), this protein is C-Jun-amino-terminal kinase-interacting protein 3 (Mapk8ip3).